Here is a 140-residue protein sequence, read N- to C-terminus: Probable lipoprotein LppE (140 aa).

An N-terminal signal peptide occupies residues 1 to 21; sequence MCNRLVTVTGVAMVVAAGLSA. Cys22 is lipidated: N-palmitoyl cysteine. The S-diacylglycerol cysteine moiety is linked to residue Cys22.

It belongs to the mycobacterial 19 kDa antigen family.

The protein localises to the cell membrane. The protein is Probable lipoprotein LppE (lppE) of Mycobacterium tuberculosis (strain ATCC 25618 / H37Rv).